Here is a 496-residue protein sequence, read N- to C-terminus: Apolipoprotein N-acyltransferase (496 aa).

The next 6 helical transmembrane spans lie at glycine 23–tryptophan 43, leucine 50–leucine 70, leucine 84–leucine 104, leucine 126–glutamine 146, tryptophan 171–isoleucine 191, and phenylalanine 205–isoleucine 225. Residues tryptophan 236 to isoleucine 464 enclose the CN hydrolase domain. Glutamate 276 serves as the catalytic Proton acceptor. Lysine 325 is a catalytic residue. Cysteine 374 (nucleophile) is an active-site residue. A helical transmembrane segment spans residues proline 476–asparagine 496.

The protein belongs to the CN hydrolase family. Apolipoprotein N-acyltransferase subfamily.

It localises to the cell inner membrane. The enzyme catalyses N-terminal S-1,2-diacyl-sn-glyceryl-L-cysteinyl-[lipoprotein] + a glycerophospholipid = N-acyl-S-1,2-diacyl-sn-glyceryl-L-cysteinyl-[lipoprotein] + a 2-acyl-sn-glycero-3-phospholipid + H(+). It participates in protein modification; lipoprotein biosynthesis (N-acyl transfer). Functionally, catalyzes the phospholipid dependent N-acylation of the N-terminal cysteine of apolipoprotein, the last step in lipoprotein maturation. This is Apolipoprotein N-acyltransferase from Prochlorococcus marinus subsp. pastoris (strain CCMP1986 / NIES-2087 / MED4).